A 158-amino-acid chain; its full sequence is Ribonuclease H (158 aa).

In terms of domain architecture, RNase H type-1 spans 5-146 (MRKQIEIFTD…CDQLAKQGAE (142 aa)). Mg(2+) is bound by residues Asp14, Glu52, Asp74, and Asp138.

It belongs to the RNase H family. As to quaternary structure, monomer. It depends on Mg(2+) as a cofactor.

The protein localises to the cytoplasm. It catalyses the reaction Endonucleolytic cleavage to 5'-phosphomonoester.. Endonuclease that specifically degrades the RNA of RNA-DNA hybrids. This chain is Ribonuclease H, found in Mannheimia succiniciproducens (strain KCTC 0769BP / MBEL55E).